The primary structure comprises 188 residues: Elongation factor P (188 aa).

The residue at position 34 (K34) is an N6-(3,6-diaminohexanoyl)-5-hydroxylysine.

This sequence belongs to the elongation factor P family. Post-translationally, may be beta-lysylated on the epsilon-amino group of Lys-34 by the combined action of EpmA and EpmB, and then hydroxylated on the C5 position of the same residue by EpmC (if this protein is present). Lysylation is critical for the stimulatory effect of EF-P on peptide-bond formation. The lysylation moiety may extend toward the peptidyltransferase center and stabilize the terminal 3-CCA end of the tRNA. Hydroxylation of the C5 position on Lys-34 may allow additional potential stabilizing hydrogen-bond interactions with the P-tRNA.

It is found in the cytoplasm. It functions in the pathway protein biosynthesis; polypeptide chain elongation. Involved in peptide bond synthesis. Alleviates ribosome stalling that occurs when 3 or more consecutive Pro residues or the sequence PPG is present in a protein, possibly by augmenting the peptidyl transferase activity of the ribosome. Modification of Lys-34 is required for alleviation. The protein is Elongation factor P of Xanthomonas campestris pv. campestris (strain B100).